A 217-amino-acid polypeptide reads, in one-letter code: Phosphatidylinositol phosphate synthase (217 aa).

The next 2 helical transmembrane spans lie at 28–49 (LTPD…LTLF) and 55–74 (FAGA…DGAM). Residue 31-34 (DVVT) coordinates a CDP-1,2-diacyl-sn-glycerol. Residues aspartate 68 and aspartate 71 each coordinate Mg(2+). 3 residues coordinate a CDP-1,2-diacyl-sn-glycerol: glycine 72, arginine 76, and threonine 82. 2 residues coordinate Mg(2+): aspartate 89 and aspartate 93. Residue aspartate 93 is the Proton acceptor of the active site. Helical transmembrane passes span 95–112 (ISDG…AFHM), 118–136 (VIAT…YIKA), 156–173 (LIIV…FVPW), and 179–200 (VGMW…HTVW).

Belongs to the CDP-alcohol phosphatidyltransferase class-I family. In terms of assembly, homodimer. It depends on Mg(2+) as a cofactor.

The protein resides in the cell membrane. It catalyses the reaction a CDP-1,2-diacyl-sn-glycerol + 1D-myo-inositol 3-phosphate = a 1,2-diacyl-sn-glycero-3-phospho-(1D-myo-inositol-3-phosphate) + CMP + H(+). The catalysed reaction is 1,2-di-(9Z-octadecenoyl)-sn-glycero-3-cytidine-5'-diphosphate + 1D-myo-inositol 3-phosphate = 1,2-di-(9Z-octadecenoyl)-sn-glycero-3-phospho-(1D-myo-inositol-3-phosphate) + CMP + H(+). Its pathway is phospholipid metabolism; phosphatidylinositol phosphate biosynthesis. With respect to regulation, competitively inhibited by several inositol 1-phosphate analogs, including the phosphonate analog 1-deoxy-1-phosphonomethyl-myo-inositol (Ino-C-P). Its function is as follows. Catalyzes the conjugation of the 1'-hydroxyl group of D-myo-inositol-3-phosphate (also named L-myo-inositol-1-phosphate) with a lipid tail of cytidine diphosphate diacylglycerol (CDP-DAG), forming phosphatidylinositol phosphate (PIP) and CMP. PIP is a precursor of phosphatidylinositol (PI) which is an essential lipid for mycobacteria required for formation of their cell wall. The protein is Phosphatidylinositol phosphate synthase of Mycobacterium bovis (strain BCG / Pasteur 1173P2).